A 300-amino-acid chain; its full sequence is Ribonuclease HIII (300 aa).

In terms of domain architecture, RNase H type-2 spans 83-300 (IPIIGSDEVG…THKAQALLTK (218 aa)). Residues Asp89, Glu90, and Asp194 each contribute to the a divalent metal cation site.

The protein belongs to the RNase HII family. RnhC subfamily. Mn(2+) serves as cofactor. Mg(2+) is required as a cofactor.

Its subcellular location is the cytoplasm. It carries out the reaction Endonucleolytic cleavage to 5'-phosphomonoester.. In terms of biological role, endonuclease that specifically degrades the RNA of RNA-DNA hybrids. This chain is Ribonuclease HIII, found in Streptococcus pyogenes serotype M28 (strain MGAS6180).